A 457-amino-acid chain; its full sequence is ATP-dependent RNA helicase DbpA (457 aa).

The short motif at 3-31 is the Q motif element; that stretch reads AFSTLNVLPPAQLTNLNELGYLTMTPVQA. One can recognise a Helicase ATP-binding domain in the interval 34–205; the sequence is LPAILAGKDV…GRVQRDPLAI (172 aa). Residue 47–54 participates in ATP binding; it reads AKTGSGKT. The DEAD box signature appears at 153–156; it reads DEAD. A Helicase C-terminal domain is found at 230-376; that stretch reads PLLQRLLSLH…QTPPANSSIA (147 aa). The tract at residues 383-457 is involved in 23S rRNA binding; sequence ATLCIDGGKK…GKTCRVRLLK (75 aa).

It belongs to the DEAD box helicase family. DbpA subfamily. As to quaternary structure, monomer.

The protein resides in the cytoplasm. It carries out the reaction ATP + H2O = ADP + phosphate + H(+). Requires hairpin 92 of 23S rRNA for optimal activity. ATPase activity is stimulated by interaction of the N-terminal domain with RNA. DEAD-box RNA helicase involved in the assembly of the 50S ribosomal subunit. Has an RNA-dependent ATPase activity, which is specific for 23S rRNA, and a 3' to 5' RNA helicase activity that uses the energy of ATP hydrolysis to destabilize and unwind short rRNA duplexes. Requires a single-stranded RNA loading site on the 3' side of the substrate helix. The chain is ATP-dependent RNA helicase DbpA from Escherichia coli (strain K12).